The primary structure comprises 925 residues: Bifunctional uridylyltransferase/uridylyl-removing enzyme (925 aa).

A uridylyltransferase region spans residues 1-382 (MVLPTTKDAT…PPGAEVRRVP (382 aa)). The interval 383–738 (DSDDFIIDNN…VGFDEARGVT (356 aa)) is uridylyl-removing. The region spanning 498-621 (VDEHLIRCIG…VQSVERMKLL (124 aa)) is the HD domain. ACT domains follow at residues 739 to 820 (ELTI…DVMP) and 849 to 925 (MIEV…NTAE).

Belongs to the GlnD family. It depends on Mg(2+) as a cofactor.

The enzyme catalyses [protein-PII]-L-tyrosine + UTP = [protein-PII]-uridylyl-L-tyrosine + diphosphate. It catalyses the reaction [protein-PII]-uridylyl-L-tyrosine + H2O = [protein-PII]-L-tyrosine + UMP + H(+). Uridylyltransferase (UTase) activity is inhibited by glutamine, while glutamine activates uridylyl-removing (UR) activity. In terms of biological role, modifies, by uridylylation and deuridylylation, the PII regulatory proteins (GlnB and homologs), in response to the nitrogen status of the cell that GlnD senses through the glutamine level. Under low glutamine levels, catalyzes the conversion of the PII proteins and UTP to PII-UMP and PPi, while under higher glutamine levels, GlnD hydrolyzes PII-UMP to PII and UMP (deuridylylation). Thus, controls uridylylation state and activity of the PII proteins, and plays an important role in the regulation of nitrogen assimilation and metabolism. The polypeptide is Bifunctional uridylyltransferase/uridylyl-removing enzyme (Nitrobacter winogradskyi (strain ATCC 25391 / DSM 10237 / CIP 104748 / NCIMB 11846 / Nb-255)).